The sequence spans 133 residues: ATP synthase epsilon chain (133 aa).

This sequence belongs to the ATPase epsilon chain family. F-type ATPases have 2 components, CF(1) - the catalytic core - and CF(0) - the membrane proton channel. CF(1) has five subunits: alpha(3), beta(3), gamma(1), delta(1), epsilon(1). CF(0) has three main subunits: a, b and c.

It is found in the cell membrane. Produces ATP from ADP in the presence of a proton gradient across the membrane. The protein is ATP synthase epsilon chain (atpC) of Clostridium acetobutylicum (strain ATCC 824 / DSM 792 / JCM 1419 / IAM 19013 / LMG 5710 / NBRC 13948 / NRRL B-527 / VKM B-1787 / 2291 / W).